Consider the following 181-residue polypeptide: Nucleoside triphosphate/diphosphate phosphatase (181 aa).

Catalysis depends on Arg-26, which acts as the Proton donor. Positions 90, 106, 108, 110, 123, and 126 each coordinate Mg(2+).

It belongs to the Ntdp family. The cofactor is Mg(2+).

It carries out the reaction a ribonucleoside 5'-triphosphate + H2O = a ribonucleoside 5'-diphosphate + phosphate + H(+). The enzyme catalyses a ribonucleoside 5'-diphosphate + H2O = a ribonucleoside 5'-phosphate + phosphate + H(+). Its function is as follows. Has nucleoside phosphatase activity towards nucleoside triphosphates and nucleoside diphosphates. In Staphylococcus carnosus (strain TM300), this protein is Nucleoside triphosphate/diphosphate phosphatase.